A 909-amino-acid chain; its full sequence is GTPase activating protein homolog 4 (909 aa).

The F-BAR domain maps to 1-257 (MASLIGSAKL…PTPDFQFESC (257 aa)). The 192-residue stretch at 322 to 513 (IPIEEIMFKQ…LIIEGYLKLS (192 aa)) folds into the Rho-GAP domain. The segment at 529-909 (IPSFSNNNNN…QRVPPPPSQS (381 aa)) is disordered. Composition is skewed to low complexity over residues 533-562 (SNNNNNSTTTTTTTTTTTVPSSTSTNITTN) and 571-602 (SSTTPLPSLTTFSQSQSSSPPNQPSPSITPQQ). Positions 609–625 (SYQPPQPPPTMAPPPLF) are enriched in pro residues. The segment covering 651 to 674 (QYTQSSSNLPPIQLGVTNSPSKPQ) has biased composition (polar residues). Residues 672-809 (KPQLSDKQKE…QQLQQQSNGS (138 aa)) adopt a coiled-coil conformation. A compositionally biased stretch (basic and acidic residues) spans 675-716 (LSDKQKEKEKEKEKEKEKEKEREKEKEKEKEKEKEKEKEKEK). Over residues 723–741 (SSSTSPNSSSLSISNFLSS) the composition is skewed to low complexity. The span at 742–765 (NKDKDKEKDKEKEKEKEKEKDKEI) shows a compositional bias: basic and acidic residues. A compositionally biased stretch (polar residues) spans 767 to 785 (ATNSTPEKPVSNRMSLIFS). Low complexity-rich tracts occupy residues 786 to 828 (QQLQ…MSPS) and 843 to 892 (SGTS…ELKS).

It is found in the cytoplasm. It localises to the contractile vacuole. Its function is as follows. Rho GTPase-activating protein involved in the signal transduction pathway. The chain is GTPase activating protein homolog 4 (mgp4) from Dictyostelium discoideum (Social amoeba).